The following is a 335-amino-acid chain: Syntaxin-18 (335 aa).

Over 1-309 the chain is Cytoplasmic; it reads MAVDITLLFR…EDIREAIKNN (309 aa). The span at 168-208 shows a compositional bias: basic and acidic residues; sequence KLEPEPNTKTRESTSSEKVSRSPSKDSEENPATEERPEKIL. The disordered stretch occupies residues 168–226; it reads KLEPEPNTKTRESTSSEKVSRSPSKDSEENPATEERPEKILAETQPELGTWGDGKGEDE. One can recognise a t-SNARE coiled-coil homology domain in the interval 243 to 305; sequence IGEMNSLFDE…KEGNEDIREA (63 aa). The helical; Anchor for type IV membrane protein transmembrane segment at 310–330 threads the bilayer; that stretch reads AGFRVWILFFLVMCSFSLLFL. Topologically, residues 331–335 are vesicular; it reads DWYDS.

The protein belongs to the syntaxin family. As to quaternary structure, component of a SNARE complex consisting of STX18, USE1L, BNIP1/SEC20L, and SEC22B. RINT1/TIP20L and ZW10 are associated with the complex through interaction with BNIP1/SEC20L. Interacts directly with USE1L and BNIP1/SEC20L.

It is found in the endoplasmic reticulum membrane. Its subcellular location is the golgi apparatus membrane. In terms of biological role, syntaxin that may be involved in targeting and fusion of Golgi-derived retrograde transport vesicles with the ER. The polypeptide is Syntaxin-18 (STX18) (Pongo abelii (Sumatran orangutan)).